The following is a 513-amino-acid chain: ATP synthase subunit alpha, mitochondrial (513 aa).

ATP is bound at residue 170–177 (GDRQTGKT).

It belongs to the ATPase alpha/beta chains family. F-type ATPases have 2 components, CF(1) - the catalytic core - and CF(0) - the membrane proton channel. CF(1) has five subunits: alpha(3), beta(3), gamma(1), delta(1), epsilon(1). CF(0) has three main subunits: a, b and c.

The protein localises to the mitochondrion. The protein resides in the mitochondrion inner membrane. In terms of biological role, mitochondrial membrane ATP synthase (F(1)F(0) ATP synthase or Complex V) produces ATP from ADP in the presence of a proton gradient across the membrane which is generated by electron transport complexes of the respiratory chain. F-type ATPases consist of two structural domains, F(1) - containing the extramembraneous catalytic core, and F(0) - containing the membrane proton channel, linked together by a central stalk and a peripheral stalk. During catalysis, ATP synthesis in the catalytic domain of F(1) is coupled via a rotary mechanism of the central stalk subunits to proton translocation. Subunits alpha and beta form the catalytic core in F(1). Rotation of the central stalk against the surrounding alpha(3)beta(3) subunits leads to hydrolysis of ATP in three separate catalytic sites on the beta subunits. Subunit alpha does not bear the catalytic high-affinity ATP-binding sites. In Marchantia polymorpha (Common liverwort), this protein is ATP synthase subunit alpha, mitochondrial (ATPA).